Consider the following 124-residue polypeptide: Ribonuclease pancreatic (124 aa).

The segment covering 1 to 13 (SETAAEKFERQHM) has biased composition (basic and acidic residues). Residues 1 to 23 (SETAAEKFERQHMDSYSSSSSNS) are disordered. 2 residues coordinate substrate: K7 and R10. The Proton acceptor role is filled by H12. Disulfide bonds link C26-C84, C40-C95, C58-C110, and C65-C72. Substrate contacts are provided by residues 41 to 45 (KPVNT), K66, and R85. The active-site Proton donor is H119.

It belongs to the pancreatic ribonuclease family. As to quaternary structure, monomer. Interacts with and forms tight 1:1 complexes with RNH1. Dimerization of two such complexes may occur. Interaction with RNH1 inhibits this protein. In terms of tissue distribution, pancreas.

The protein resides in the secreted. The catalysed reaction is an [RNA] containing cytidine + H2O = an [RNA]-3'-cytidine-3'-phosphate + a 5'-hydroxy-ribonucleotide-3'-[RNA].. It catalyses the reaction an [RNA] containing uridine + H2O = an [RNA]-3'-uridine-3'-phosphate + a 5'-hydroxy-ribonucleotide-3'-[RNA].. Functionally, endonuclease that catalyzes the cleavage of RNA on the 3' side of pyrimidine nucleotides. Acts on single-stranded and double-stranded RNA. This chain is Ribonuclease pancreatic (RNASE1), found in Camelus dromedarius (Dromedary).